Here is a 114-residue protein sequence, read N- to C-terminus: Ribosome-binding factor A (114 aa).

It belongs to the RbfA family. In terms of assembly, monomer. Binds 30S ribosomal subunits, but not 50S ribosomal subunits or 70S ribosomes.

It is found in the cytoplasm. In terms of biological role, one of several proteins that assist in the late maturation steps of the functional core of the 30S ribosomal subunit. Associates with free 30S ribosomal subunits (but not with 30S subunits that are part of 70S ribosomes or polysomes). Required for efficient processing of 16S rRNA. May interact with the 5'-terminal helix region of 16S rRNA. This chain is Ribosome-binding factor A, found in Vesicomyosocius okutanii subsp. Calyptogena okutanii (strain HA).